A 354-amino-acid polypeptide reads, in one-letter code: Phosphate acyltransferase (354 aa).

It belongs to the PlsX family. As to quaternary structure, homodimer. Probably interacts with PlsY.

It is found in the cytoplasm. The catalysed reaction is a fatty acyl-[ACP] + phosphate = an acyl phosphate + holo-[ACP]. It functions in the pathway lipid metabolism; phospholipid metabolism. Functionally, catalyzes the reversible formation of acyl-phosphate (acyl-PO(4)) from acyl-[acyl-carrier-protein] (acyl-ACP). This enzyme utilizes acyl-ACP as fatty acyl donor, but not acyl-CoA. This Nitrobacter hamburgensis (strain DSM 10229 / NCIMB 13809 / X14) protein is Phosphate acyltransferase.